The following is a 1079-amino-acid chain: Extracellular calcium-sensing receptor (1079 aa).

The signal sequence occupies residues 1–19 (MAFSSCCWILLALTWCTSA). Residues 20–610 (YGPDQRAQKK…KEIEFLSWTE (591 aa)) are Extracellular-facing. Residues 22 to 188 (PDQRAQKKGD…QFKSFLRTIP (167 aa)) are ligand-binding 1 (LB1). The cysteines at positions 60 and 101 are disulfide-linked. 66 to 70 (RGFRW) provides a ligand contact to phosphate. Residues Ile-81, Ser-84, Leu-87, and Leu-88 each coordinate Ca(2+). N-linked (GlcNAc...) asparagine glycosylation is present at Asn-90. Thr-100 serves as a coordination point for Ca(2+). Asn-130 carries N-linked (GlcNAc...) asparagine glycosylation. Thr-145 is a binding site for Ca(2+). The L-tryptophan site is built by Ser-147, Ala-168, and Ser-170. Ca(2+) is bound by residues Ser-170, Pro-188, Asp-190, Glu-231, and Asp-234. The interval 189 to 324 (NDEHQATAMA…GGTIGFALKA (136 aa)) is ligand-binding 2 (LB2). Intrachain disulfides connect Cys-236/Cys-561, Cys-358/Cys-395, Cys-437/Cys-449, Cys-542/Cys-562, Cys-546/Cys-565, Cys-568/Cys-582, and Cys-585/Cys-598. 2 residues coordinate spermine: Asp-238 and Ser-240. Asn-261 and Asn-287 each carry an N-linked (GlcNAc...) asparagine glycan. A Ca(2+)-binding site is contributed by Glu-297. Position 297 (Glu-297) interacts with L-tryptophan. N-linked (GlcNAc...) asparagine glycosylation is found at Asn-386 and Asn-400. Position 415 to 417 (415 to 417 (RIS)) interacts with phosphate. Residues Asn-446, Asn-468, and Asn-488 are each glycosylated (N-linked (GlcNAc...) asparagine). Residue Tyr-489 participates in Ca(2+) binding. Residue Asn-541 is glycosylated (N-linked (GlcNAc...) asparagine). The interval 542-612 (CSRDCLAGTR…IEFLSWTEPF (71 aa)) is cysteine-rich (CR). Gly-557 provides a ligand contact to Ca(2+). An N-linked (GlcNAc...) asparagine glycan is attached at Asn-594. A helical transmembrane segment spans residues 611–636 (PFGIALTLFAVLGIFLTAFVLGVFIK). Topologically, residues 637–648 (FRNTPIVKATNR) are cytoplasmic. The interval 637–648 (FRNTPIVKATNR) is intracellular loop 1 (ICL1). Residues 649-668 (ELSYLLLFSLLCCFSSSLFF) form a helical membrane-spanning segment. Residues 669–674 (IGEPQD) are Extracellular-facing. Residues 675-698 (WTCRLRQPAFGISFVLCISCILVK) form a helical membrane-spanning segment. The Cytoplasmic portion of the chain corresponds to 699 to 722 (TNRVLLVFEAKIPTSFHRKWWGLN). The segment at 699–722 (TNRVLLVFEAKIPTSFHRKWWGLN) is intracellular loop 2 (ICL2). A helical membrane pass occupies residues 723–745 (LQFLLVFLCTFMQIVICAIWLYT). Over 746–769 (APPSSYRNHELEDEIIFITCHEGS) the chain is Extracellular. A helical membrane pass occupies residues 770–789 (LMALGFLIGYTCLLAAICFF). Residues 790–805 (FAFKSRKLPENFNEAK) lie on the Cytoplasmic side of the membrane. Residues 790–805 (FAFKSRKLPENFNEAK) form an intracellular loop 3 (ICL3) region. Residues 806–828 (FITFSMLIFFIVWISFIPAYAST) form a helical membrane-spanning segment. Residues 829-832 (YGKF) are Extracellular-facing. A helical membrane pass occupies residues 833-854 (VSAVEVIAILAASFGLLACIFF). Residues 855-1079 (NKVYIILFKP…STVTENMLHS (225 aa)) lie on the Cytoplasmic side of the membrane. Positions 855 to 1079 (NKVYIILFKP…STVTENMLHS (225 aa)) are C-terminus. The tract at residues 880-900 (AFKVAARATLRRSNVSRQRSS) is interaction with RNF19A. Thr-888 is modified (phosphothreonine). Positions 890–898 (RRSNVSRQR) are arginine-rich retention motif. Phosphoserine is present on residues Ser-892, Ser-899, and Ser-920. Residues 892 to 918 (SNVSRQRSSSLGGSTGSTPSSSISSKS) show a composition bias toward low complexity. Residues 892-963 (SNVSRQRSSS…QPQLQQQPRC (72 aa)) are disordered. Over residues 945 to 954 (PQAPSTPQPQ) the composition is skewed to pro residues. Residue Ser-1062 is modified to Phosphoserine.

This sequence belongs to the G-protein coupled receptor 3 family. As to quaternary structure, homodimer; disulfide-linked. Interacts with VCP. Interacts with ARRB1. Post-translationally, phosphorylation at Thr-888 by PKC impairs coupling with G(q)/G(11) G-proteins, while it does not affect G(i)/G(o)-coupling. Phosphorylation at Ser-892 by PKC and Ser-899 by PKA promote plasma membrane localization. In terms of processing, ubiquitinated by RNF19A; which induces proteasomal degradation.

It is found in the cell membrane. Its activity is regulated as follows. In resting state, adopts an open conformation, anion-binding promoting the inactive configuration. Upon aromatic amino acid-binding, the groove in the extracellular venus flytrap module is closed, thereby inducing the formation of a novel homodimer interface between subunits. Calcium ions stabilize the active state by enhancing homodimer interactions between membrane-proximal domains to fully activate the receptor. Upon activation, the homodimer adopts an asymmetric configuration of the 7-transmembrane region that primes one protomer for G-protein coupling. G-protein binding expands the transmembrane dimer interface; the restriction imposed by the receptor dimer, in combination with intracellular loop 2 (ICL2), enables G-protein activation by facilitating conformational transition of G-protein alpha. Coupling to different classes of G-proteins results in distinct CASR-G-protein interfaces. In contrast to human protein, not activated by AMG 416, a D-amino acid-containing peptide agonist: this is probably due to the absence of a Cys residue at position 482, which forms a disulfide bond with the AMG 416 peptide agonist in human and that is replaced by a Tyr residue in pig. In terms of biological role, G-protein-coupled receptor that senses changes in the extracellular concentration of calcium ions and plays a key role in maintaining calcium homeostasis. Senses fluctuations in the circulating calcium concentration: activated by elevated circulating calcium, leading to decreased parathyroid hormone (PTH) secretion in parathyroid glands. In kidneys, acts as a key regulator of renal tubular calcium resorption. Ligand binding causes a conformation change that triggers signaling via guanine nucleotide-binding proteins (G-proteins) and modulates the activity of downstream effectors. CASR is coupled with different G(q)/G(11), G(i)/G(o)- or G(s)-classes of G-proteins depending on the context. In the parathyroid and kidney, CASR signals through G(q)/G(11) and G(i)/G(o) G-proteins: G(q)/G(11) coupling activates phospholipase C-beta, releasing diacylglycerol (DAG) and inositol 1,4,5-trisphosphate (IP3) second messengers, while G(i)/G(o) coupling mediates inhibition of adenylate cyclase activity. The G-protein-coupled receptor activity is activated by a co-agonist mechanism: aromatic amino acids, such as Trp or Phe, act concertedly with divalent cations, such as calcium or magnesium, to achieve full receptor activation. Acts as an activator of the NLRP3 inflammasome via G(i)/G(o)-mediated signaling: down-regulation of cyclic AMP (cAMP) relieving NLRP3 inhibition by cAMP. Acts as a regulator of proton-sensing receptor GPR68 in a seesaw manner: CASR-mediated signaling inhibits GPR68 signaling in response to extracellular calcium, while GPR68 inhibits CASR in presence of extracellular protons. In Sus scrofa (Pig), this protein is Extracellular calcium-sensing receptor (CASR).